The primary structure comprises 158 residues: 2-C-methyl-D-erythritol 2,4-cyclodiphosphate synthase (158 aa).

The a divalent metal cation site is built by Asp9 and His11. 4-CDP-2-C-methyl-D-erythritol 2-phosphate is bound by residues 9–11 (DVH) and 35–36 (HS). His43 is an a divalent metal cation binding site. Residues 57 to 59 (DIG), 62 to 66 (FPDTD), 101 to 107 (AQKPKMA), 133 to 136 (TTTE), Phe140, and Arg143 each bind 4-CDP-2-C-methyl-D-erythritol 2-phosphate.

It belongs to the IspF family. Homotrimer. Requires a divalent metal cation as cofactor.

It catalyses the reaction 4-CDP-2-C-methyl-D-erythritol 2-phosphate = 2-C-methyl-D-erythritol 2,4-cyclic diphosphate + CMP. It functions in the pathway isoprenoid biosynthesis; isopentenyl diphosphate biosynthesis via DXP pathway; isopentenyl diphosphate from 1-deoxy-D-xylulose 5-phosphate: step 4/6. Involved in the biosynthesis of isopentenyl diphosphate (IPP) and dimethylallyl diphosphate (DMAPP), two major building blocks of isoprenoid compounds. Catalyzes the conversion of 4-diphosphocytidyl-2-C-methyl-D-erythritol 2-phosphate (CDP-ME2P) to 2-C-methyl-D-erythritol 2,4-cyclodiphosphate (ME-CPP) with a corresponding release of cytidine 5-monophosphate (CMP). This is 2-C-methyl-D-erythritol 2,4-cyclodiphosphate synthase from Bacillus licheniformis (strain ATCC 14580 / DSM 13 / JCM 2505 / CCUG 7422 / NBRC 12200 / NCIMB 9375 / NCTC 10341 / NRRL NRS-1264 / Gibson 46).